The sequence spans 358 residues: Protein SGT1 homolog B (358 aa).

TPR repeat units follow at residues Ala2 to Cys35, Ala37 to Leu69, and Ala70 to Glu103. Positions Lys157 to Glu246 constitute a CS domain. Residues Pro255–Ala275 form a disordered region. In terms of domain architecture, SGS spans Val268–Tyr358.

It belongs to the SGT1 family. Interacts with RAR1 and HSP90-2. Interacts (via SGS domain) with HSC70-1 and HSC70-3.

Its subcellular location is the cytoplasm. It is found in the nucleus. Its function is as follows. Involved in plant innate immunity. Essential for race-specific resistance conferred by multiple R genes, including RPP7, recognizing different oomycete pathogen isolates like avirulent Hyaloperonospora arabidopsidis (downy mildew). Contributes additively with RAR1 to RPP5-dependent resistance. Not required for RPM1, RPS2, RPS4 and RPS5-mediated resistance. Functions as a negative regulator of RPS5 accumulation by assisting its degradation. May be involved in heat shock response by associating with HSC70-1 chaperone. Required for the SCF(TIR1)-mediated degradation of Aux/IAA proteins, but maybe not for SCF(TIR1) assembly or binding to its Aux/IAA substrates. Probably required for SCF-mediated ubiquitination, by coupling HSP90 to SCF complex for ubiquitination of HSP90 client proteins. Required for the coronatine/jasmonic acid-mediated signal transduction pathway. The chain is Protein SGT1 homolog B from Arabidopsis thaliana (Mouse-ear cress).